A 114-amino-acid polypeptide reads, in one-letter code: UPF0342 protein OEOE_0901 (114 aa).

The protein belongs to the UPF0342 family.

The sequence is that of UPF0342 protein OEOE_0901 from Oenococcus oeni (strain ATCC BAA-331 / PSU-1).